A 530-amino-acid polypeptide reads, in one-letter code: MDDLQSQNLSMDMTDSPPALANNRLENGMAQLITTEAWNINSTDLVKKALVTVPAPSILNPPAESQSGMALKVAATVLQPLCLGESPVVMPIHMQVEGSSAPELNPNGNATYVMTTQGPVQLPVVLEQHVFQHLNSPLVLPQEAPCSSSTIHNNLFQGAEDPEAQPQLLDLRIPSQPQEPTLPFEAVLQNLFPSQGTLGPPPCQPPPGYAPVPPQPFSSPLSPLVPPATLLVPYPVIVPLPVPVPIPIPIPMPQSSESKFSSSFPKPPSSFGLHPFKGTQTPLEKDELKPFDILQPKEYFQLSRHTVIKMGSENEALDLSMKSVPWLKAGEVSPPIFQEDAALDLSVAAHRKSEPPPETLYDSGASVDSSGHTVMEKLPSGMEISFAPATSHEAPAMMDSHISSSDAATEMLSQPNHPSGEVKAENNIEMVGESQAAKVIVSVEDAVPTIFCGKIKGLSGVSTKNFSFKREDSVLQGYDINSQGEESMGNAEPLRKPIKNRSIKLKKVNSQEIHMLPIKKQRLATFFPRK.

Residues 1–13 (MDDLQSQNLSMDM) are compositionally biased toward polar residues. The disordered stretch occupies residues 1 to 22 (MDDLQSQNLSMDMTDSPPALAN).

The sequence is that of Retinoic acid-induced protein 2 (RAI2) from Homo sapiens (Human).